The chain runs to 317 residues: Putative HTH-type transcriptional regulatory protein NP_1320A (317 aa).

The region spanning 132–189 (LSDIRSQEDMSLGKLANELGVSRRTVSKYEDGMSASVEVAAELEEIFDRKLASPVEVL) is the HTH cro/C1-type domain. A DNA-binding region (H-T-H motif) is located at residues 143–162 (LGKLANELGVSRRTVSKYED).

The polypeptide is Putative HTH-type transcriptional regulatory protein NP_1320A (Natronomonas pharaonis (strain ATCC 35678 / DSM 2160 / CIP 103997 / JCM 8858 / NBRC 14720 / NCIMB 2260 / Gabara) (Halobacterium pharaonis)).